The primary structure comprises 540 residues: Homoserine O-acetyltransferase (540 aa).

In terms of domain architecture, AB hydrolase-1 spans 66-404; sequence NVILICHALT…QHGHDAFLLE (339 aa). S171 (nucleophile) is an active-site residue. Substrate is bound at residue R240. The disordered stretch occupies residues 262-284; it reads QDTDKSGIKGTTGTEGKNSSEIS. Residues D365 and H398 contribute to the active site. Position 399 (D399) interacts with substrate. CBS domains follow at residues 425-484 and 486-540; these read MNRN…ELDE and ITRD…GKYD.

Belongs to the AB hydrolase superfamily. MetX family. Homodimer.

The protein localises to the cytoplasm. It carries out the reaction L-homoserine + acetyl-CoA = O-acetyl-L-homoserine + CoA. It functions in the pathway amino-acid biosynthesis; L-methionine biosynthesis via de novo pathway; O-acetyl-L-homoserine from L-homoserine: step 1/1. Functionally, transfers an acetyl group from acetyl-CoA to L-homoserine, forming acetyl-L-homoserine. In vitro, can also use propionyl-CoA or butiryl-CoA as acyl donor. This is Homoserine O-acetyltransferase from Methanosarcina acetivorans (strain ATCC 35395 / DSM 2834 / JCM 12185 / C2A).